The chain runs to 744 residues: FNIP repeat-containing protein cigB (744 aa).

FNIP repeat units follow at residues 340 to 376, 383 to 422, 426 to 462, 469 to 508, 512 to 550, 555 to 594, 598 to 635, 641 to 678, and 684 to 723; these read FNQK…TVTT, FNQK…TVIL, FNQK…TVTR, FNQK…TITL, FNQK…TTVR, FNQK…VTTV, and FNQK…NVYI.

The chain is FNIP repeat-containing protein cigB (cigB) from Dictyostelium discoideum (Social amoeba).